The following is a 201-amino-acid chain: UPF0301 protein RER_60040 (201 aa).

This sequence belongs to the UPF0301 (AlgH) family.

The protein is UPF0301 protein RER_60040 of Rhodococcus erythropolis (strain PR4 / NBRC 100887).